A 642-amino-acid polypeptide reads, in one-letter code: MDGKSEFKEELINYILLKKYGKGAQDPPVYSNALKKAPQEMFPPGLVDALDSYSINLSRSEGVEFLVLLNSLVNDIRSEEVKDIIFGMINTNQMLTKLMKDKKEVERFPDTCKMYSEQFKANKPLLKEFNAGSRKEQGNLEIGEPSENVVTRFPPEPNGRLHIGHARAALLNWYFASKGNGRLLVRFDDTNPEKEEERFERGILSDLSLLGINEYTLSHTSDYFDKIIDLGVFLIGEGKAYADNTPQEVMRDERGRGVESRCRSMDVEESKRIFKEMARGNASGYCLRAKIDMSSSNKAMRDPVIFRVNESPHHRTGDKYKVYPTYDFACPIVDSLEGITLSLRANEYRDRNQQYYWFIDNLRLRNRPKIHDFSRLNFENTVLSKRKLKYYVDNGFVSGWDDPRLATIAGIKRLGMNMEALREYILMQGVSQKTCTISWDKVWAINRKKIDPVSARYFCVQQRDAVEVSIDNTSEYTMDVPKHKKNGDLGTKEVFYSSQILLSQEDGRVLQDNEEFTLMNWGNAIVKSKTVENGTVTKMEVSLNPDGDFKLTKNKMSWVSKRGSVTVELAEYGNLMNDEDTEDLALRFNRNSVKKEYWYAESAIINVREGEVIQFERNGFYYCDGFLVFNLLPFTKQKRTGN.

An L-glutamate-binding site is contributed by 152-154 (RFP). The 'HIGH' region signature appears at 157–166 (PNGRLHIGHA). His162 is a binding site for ATP. Residues Asp188, 326–330 (YDFAC), and Arg344 each bind L-glutamate. Residues Glu347 and 382–386 (VLSKR) each bind ATP. The 'KMSKS' region signature appears at 382-386 (VLSKR).

This sequence belongs to the class-I aminoacyl-tRNA synthetase family. Glutamate--tRNA ligase type 2 subfamily.

It is found in the cytoplasm. It catalyses the reaction tRNA(Glu) + L-glutamate + ATP = L-glutamyl-tRNA(Glu) + AMP + diphosphate. The chain is Probable glutamate--tRNA ligase, cytoplasmic from Encephalitozoon cuniculi (strain GB-M1) (Microsporidian parasite).